The chain runs to 698 residues: DNA-directed RNA polymerase subunit beta' (698 aa).

4 residues coordinate Zn(2+): cysteine 69, cysteine 71, cysteine 89, and cysteine 92. 3 residues coordinate Mg(2+): aspartate 509, aspartate 511, and aspartate 513.

This sequence belongs to the RNA polymerase beta' chain family. RpoC1 subfamily. In plastids the minimal PEP RNA polymerase catalytic core is composed of four subunits: alpha, beta, beta', and beta''. When a (nuclear-encoded) sigma factor is associated with the core the holoenzyme is formed, which can initiate transcription. The cofactor is Mg(2+). Zn(2+) is required as a cofactor.

The protein resides in the plastid. It is found in the chloroplast. It catalyses the reaction RNA(n) + a ribonucleoside 5'-triphosphate = RNA(n+1) + diphosphate. Functionally, DNA-dependent RNA polymerase catalyzes the transcription of DNA into RNA using the four ribonucleoside triphosphates as substrates. The chain is DNA-directed RNA polymerase subunit beta' from Cryptomeria japonica (Japanese cedar).